Here is a 156-residue protein sequence, read N- to C-terminus: Cyclic pyranopterin monophosphate synthase (156 aa).

Substrate-binding positions include 75–77 (LCH) and 111–112 (ME). The active site involves D126.

Belongs to the MoaC family. Homohexamer; trimer of dimers.

The catalysed reaction is (8S)-3',8-cyclo-7,8-dihydroguanosine 5'-triphosphate = cyclic pyranopterin phosphate + diphosphate. The protein operates within cofactor biosynthesis; molybdopterin biosynthesis. Functionally, catalyzes the conversion of (8S)-3',8-cyclo-7,8-dihydroguanosine 5'-triphosphate to cyclic pyranopterin monophosphate (cPMP). This Erythrobacter litoralis (strain HTCC2594) protein is Cyclic pyranopterin monophosphate synthase.